The following is a 180-amino-acid chain: Acireductone dioxygenase 1 (180 aa).

Residues histidine 82, histidine 84, glutamate 88, and histidine 127 each contribute to the Fe(2+) site. Residues histidine 82, histidine 84, glutamate 88, and histidine 127 each contribute to the Ni(2+) site.

The protein belongs to the acireductone dioxygenase (ARD) family. It depends on Fe(2+) as a cofactor. Ni(2+) is required as a cofactor.

It localises to the cytoplasm. The protein resides in the nucleus. The enzyme catalyses 1,2-dihydroxy-5-(methylsulfanyl)pent-1-en-3-one + O2 = 4-methylsulfanyl-2-oxobutanoate + formate + 2 H(+). It catalyses the reaction 1,2-dihydroxy-5-(methylsulfanyl)pent-1-en-3-one + O2 = 3-(methylsulfanyl)propanoate + CO + formate + 2 H(+). The protein operates within amino-acid biosynthesis; L-methionine biosynthesis via salvage pathway; L-methionine from S-methyl-5-thio-alpha-D-ribose 1-phosphate: step 5/6. In terms of biological role, catalyzes 2 different reactions between oxygen and the acireductone 1,2-dihydroxy-3-keto-5-methylthiopentene (DHK-MTPene) depending upon the metal bound in the active site. Fe-containing acireductone dioxygenase (Fe-ARD) produces formate and 2-keto-4-methylthiobutyrate (KMTB), the alpha-ketoacid precursor of methionine in the methionine recycle pathway. Ni-containing acireductone dioxygenase (Ni-ARD) produces methylthiopropionate, carbon monoxide and formate, and does not lie on the methionine recycle pathway. The chain is Acireductone dioxygenase 1 from Sorghum bicolor (Sorghum).